A 192-amino-acid polypeptide reads, in one-letter code: Protein SHORT HYPOCOTYL IN WHITE LIGHT 1 (192 aa).

The Nuclear localization signal signature appears at 43–50; the sequence is FRRLNRSL. Residues 70 to 92 are disordered; that stretch reads GGDNYDVVPDDDGFSDDDDEEDE. Over residues 77-92 the composition is skewed to acidic residues; the sequence is VPDDDGFSDDDDEEDE. Transmembrane regions (helical) follow at residues 122–142 and 159–179; these read ILPAAMSPRLVSFAVDGILLL and GGTVFTVILLIRLFWAAASFF.

As to quaternary structure, interacts with HY5 and COP1 in the nucleus. As to expression, expressed in young seedlings (e.g. hypocotyl and cotyledons) and in green tissues (e.g. leaves, stems, sepals, and young siliques).

Its subcellular location is the nucleus membrane. In terms of biological role, negative regulator of photomorphogenesis modulating both light and abscisic acid (ABA) signaling pathways. Negatively regulates the light-mediated inhibition of hypocotyl elongation, probably in a PHYB-mediated signaling pathway, but promotes flowering time (especially in long days) and lateral root formation. Enhances light-regulated gene expression. Promotes COP1-mediated degradation of HY5 during seedling development (e.g. hypocotyl growth) through enhanced ubiquitination in the darkness. Also involved in root gravitropism. The protein is Protein SHORT HYPOCOTYL IN WHITE LIGHT 1 of Arabidopsis thaliana (Mouse-ear cress).